The sequence spans 332 residues: Abscisic acid-inducible protein kinase (332 aa).

ATP is bound by residues 1-8 and Lys-23; that span reads GSGNFGVA. The Protein kinase domain maps to 1–250; the sequence is GSGNFGVAKL…IPEIKNHPWF (250 aa). Asp-113 functions as the Proton acceptor in the catalytic mechanism.

This sequence belongs to the protein kinase superfamily. Ser/Thr protein kinase family. In terms of processing, autophosphorylated.

The catalysed reaction is L-seryl-[protein] + ATP = O-phospho-L-seryl-[protein] + ADP + H(+). It carries out the reaction L-threonyl-[protein] + ATP = O-phospho-L-threonyl-[protein] + ADP + H(+). In terms of biological role, involved in water-stress responses. The sequence is that of Abscisic acid-inducible protein kinase from Triticum aestivum (Wheat).